The following is a 385-amino-acid chain: Aspartate carbamoyltransferase 2, chloroplastic (385 aa).

A chloroplast-targeting transit peptide spans 1-30; that stretch reads MTASSSLFSCSMHMEVLTPKISKWPKNFVS. Arginine 131 and threonine 132 together coordinate carbamoyl phosphate. Arginine 131 and threonine 132 together coordinate UMP. Lysine 161 contacts L-aspartate. Positions 182, 210, and 213 each coordinate carbamoyl phosphate. 2 residues coordinate UMP: arginine 182 and histidine 210. UMP contacts are provided by arginine 243 and arginine 305. The L-aspartate site is built by arginine 243 and arginine 305. 2 residues coordinate carbamoyl phosphate: leucine 345 and proline 346.

It belongs to the aspartate/ornithine carbamoyltransferase superfamily. ATCase family. Homotrimer.

The protein localises to the plastid. It is found in the chloroplast. The catalysed reaction is carbamoyl phosphate + L-aspartate = N-carbamoyl-L-aspartate + phosphate + H(+). The protein operates within pyrimidine metabolism; UMP biosynthesis via de novo pathway; (S)-dihydroorotate from bicarbonate: step 2/3. Feedback inhibited by UMP. Its function is as follows. Catalyzes the condensation of carbamoyl phosphate and aspartate to form carbamoyl aspartate and inorganic phosphate, the committed step in the de novo pyrimidine nucleotide biosynthesis pathway. The polypeptide is Aspartate carbamoyltransferase 2, chloroplastic (PYRB2) (Pisum sativum (Garden pea)).